The chain runs to 277 residues: Caspase-3 (277 aa).

The residue at position 1 (Met-1) is an N-acetylmethionine. 2 propeptides span residues 1-9 (MENTENSVD) and 10-28 (AKSF…KSMD). N6-acetyllysine is present on Lys-11. At Ser-26 the chain carries Phosphoserine. Catalysis depends on residues His-121 and Cys-163. Cys-163 carries the S-nitrosocysteine; in inhibited form modification.

This sequence belongs to the peptidase C14A family. As to quaternary structure, heterotetramer that consists of two anti-parallel arranged heterodimers, each one formed by a 17 kDa (p17) and a 12 kDa (p12) subunit. Interacts with BIRC6/bruce. Post-translationally, cleavage by granzyme B, caspase-6, caspase-8 and caspase-10 generates the two active subunits. Additional processing of the propeptides is likely due to the autocatalytic activity of the activated protease. Active heterodimers between the small subunit of caspase-7 protease and the large subunit of caspase-3 also occur and vice versa. In terms of processing, S-nitrosylated on its catalytic site cysteine in unstimulated cell lines and denitrosylated upon activation of the Fas apoptotic pathway, associated with an increase in intracellular caspase activity. Fas therefore activates caspase-3 not only by inducing the cleavage of the caspase zymogen to its active subunits, but also by stimulating the denitrosylation of its active site thiol. Ubiquitinated by BIRC6; this activity is inhibited by DIABLO/SMAC.

It localises to the cytoplasm. It carries out the reaction Strict requirement for an Asp residue at positions P1 and P4. It has a preferred cleavage sequence of Asp-Xaa-Xaa-Asp-|- with a hydrophobic amino-acid residue at P2 and a hydrophilic amino-acid residue at P3, although Val or Ala are also accepted at this position.. Inhibited by BIRC6; following inhibition of BIRC6-caspase binding by DIABLO/SMAC, BIRC6 is subjected to caspase cleavage, leading to an increase in active caspases. Functionally, involved in the activation cascade of caspases responsible for apoptosis execution. At the onset of apoptosis, it proteolytically cleaves poly(ADP-ribose) polymerase PARP1 at a '216-Asp-|-Gly-217' bond. Cleaves and activates sterol regulatory element binding proteins (SREBPs) between the basic helix-loop-helix leucine zipper domain and the membrane attachment domain. Cleaves and activates caspase-6, -7 and -9 (CASP6, CASP7 and CASP9, respectively). Cleaves and inactivates interleukin-18 (IL18). Triggers cell adhesion in sympathetic neurons through RET cleavage. Cleaves IL-1 beta between an Asp and an Ala, releasing the mature cytokine which is involved in a variety of inflammatory processes. Cleaves and inhibits serine/threonine-protein kinase AKT1 in response to oxidative stress. Acts as an inhibitor of type I interferon production during virus-induced apoptosis by mediating cleavage of antiviral proteins CGAS, IRF3 and MAVS, thereby preventing cytokine overproduction. Also involved in pyroptosis by mediating cleavage and activation of gasdermin-E (GSDME). Cleaves XRCC4 and phospholipid scramblase proteins XKR4, XKR8 and XKR9, leading to promote phosphatidylserine exposure on apoptotic cell surface. Cleaves BIRC6 following inhibition of BIRC6-caspase binding by DIABLO/SMAC. The polypeptide is Caspase-3 (CASP3) (Canis lupus familiaris (Dog)).